The sequence spans 218 residues: MKLILLGAPGAGKGTQAQFICQKFGIPQISTGDMLRAAVKAGTPLGLEAKKVMDAGGLVSDDIIIGLVKERIAQADCANGFLFDGFPRTIPQAEAMKAAGVNLDFVVEIDVPDSAIVERMSGRRVHVASGRTYHVKFNPPKVAGKDDETGEDLIQRADDNEETVLKRLAVYHEQTEVLVGYYSNMAASGDKTAPTYVKIPGVGSVDGIRDAIFRALGA.

10-15 (GAGKGT) is a binding site for ATP. Residues 30–59 (STGDMLRAAVKAGTPLGLEAKKVMDAGGLV) are NMP. AMP-binding positions include Thr-31, Arg-36, 57-59 (GLV), 85-88 (GFPR), and Gln-92. Residues 122 to 159 (GRRVHVASGRTYHVKFNPPKVAGKDDETGEDLIQRADD) form an LID region. ATP-binding positions include Arg-123 and 132 to 133 (TY). AMP contacts are provided by Arg-156 and Arg-167. Gly-203 lines the ATP pocket.

Belongs to the adenylate kinase family. In terms of assembly, monomer.

The protein resides in the cytoplasm. The catalysed reaction is AMP + ATP = 2 ADP. The protein operates within purine metabolism; AMP biosynthesis via salvage pathway; AMP from ADP: step 1/1. In terms of biological role, catalyzes the reversible transfer of the terminal phosphate group between ATP and AMP. Plays an important role in cellular energy homeostasis and in adenine nucleotide metabolism. The sequence is that of Adenylate kinase from Laribacter hongkongensis (strain HLHK9).